Consider the following 294-residue polypeptide: MKQTTIARRVETVGIGLHKGEPIRLVLEPLDANMGIVFHRTDIGASFKAEPANVVNTQMATVIGNEKGFISTVEHLLSAINGYGIDNIRILVDANEIPVMDGSAISFCMLLDEAGIKQLDEGKKVILVRKEVEVAEGSKFVRTVPSRNPKFDYTIKFNHPVIGEQRYVFEFSKSRYVKEIARARTFGFLKDLQRLQAQNLALGASLDNAVAIDDTHILNPEGLRFENEFVRHKILDAVGDLSLLGAPLLGDYIAFAGSHDLNHKLTLAVLADEKNYEIATLSGELLKDYQKVFA.

The Zn(2+) site is built by His75, His232, and Asp236. His259 serves as the catalytic Proton donor.

This sequence belongs to the LpxC family. The cofactor is Zn(2+).

It carries out the reaction a UDP-3-O-[(3R)-3-hydroxyacyl]-N-acetyl-alpha-D-glucosamine + H2O = a UDP-3-O-[(3R)-3-hydroxyacyl]-alpha-D-glucosamine + acetate. It functions in the pathway glycolipid biosynthesis; lipid IV(A) biosynthesis; lipid IV(A) from (3R)-3-hydroxytetradecanoyl-[acyl-carrier-protein] and UDP-N-acetyl-alpha-D-glucosamine: step 2/6. Its function is as follows. Catalyzes the hydrolysis of UDP-3-O-myristoyl-N-acetylglucosamine to form UDP-3-O-myristoylglucosamine and acetate, the committed step in lipid A biosynthesis. This is UDP-3-O-acyl-N-acetylglucosamine deacetylase from Campylobacter curvus (strain 525.92).